Consider the following 416-residue polypeptide: Imidazolonepropionase (416 aa).

Fe(3+) contacts are provided by histidine 78 and histidine 80. Zn(2+) contacts are provided by histidine 78 and histidine 80. 4-imidazolone-5-propanoate is bound by residues arginine 87, tyrosine 150, and histidine 183. N-formimidoyl-L-glutamate is bound at residue tyrosine 150. Histidine 248 serves as a coordination point for Fe(3+). Histidine 248 serves as a coordination point for Zn(2+). Residue glutamine 251 participates in 4-imidazolone-5-propanoate binding. Aspartate 323 provides a ligand contact to Fe(3+). Zn(2+) is bound at residue aspartate 323. N-formimidoyl-L-glutamate-binding residues include asparagine 325 and glycine 327. Threonine 328 serves as a coordination point for 4-imidazolone-5-propanoate.

The protein belongs to the metallo-dependent hydrolases superfamily. HutI family. The cofactor is Zn(2+). It depends on Fe(3+) as a cofactor.

The protein resides in the cytoplasm. The catalysed reaction is 4-imidazolone-5-propanoate + H2O = N-formimidoyl-L-glutamate. The protein operates within amino-acid degradation; L-histidine degradation into L-glutamate; N-formimidoyl-L-glutamate from L-histidine: step 3/3. In terms of biological role, catalyzes the hydrolytic cleavage of the carbon-nitrogen bond in imidazolone-5-propanoate to yield N-formimidoyl-L-glutamate. It is the third step in the universal histidine degradation pathway. The polypeptide is Imidazolonepropionase (Vibrio campbellii (strain ATCC BAA-1116)).